The chain runs to 472 residues: Chitobiosyldiphosphodolichol beta-mannosyltransferase (472 aa).

Topologically, residues 1-20 are lumenal; the sequence is MEEFQFIKYKGFDHVFKYSG. A helical transmembrane segment spans residues 21-41; sequence PWLWWLVGFYLCLPILAYTLL. At 42–118 the chain is on the cytoplasmic side; it reads PYLTMNGTIS…PITVTKNTSN (77 aa). The helical intramembrane region spans 119–139; that stretch reads LPFILFAAKKMVVQFFQLLKL. The Cytoplasmic segment spans residues 140-472; the sequence is LSDFRGTDYV…MGKRFEYSTD (333 aa).

Belongs to the glycosyltransferase group 1 family.

The protein localises to the endoplasmic reticulum membrane. It catalyses the reaction an N,N'-diacetylchitobiosyl-diphospho-di-trans,poly-cis-dolichol + GDP-alpha-D-mannose = a beta-D-Man-(1-&gt;4)-beta-D-GlcNAc-(1-&gt;4)-alpha-D-GlcNAc-diphospho-di-trans,poly-cis-dolichol + GDP + H(+). The protein operates within protein modification; protein glycosylation. Functionally, participates in the formation of the lipid-linked precursor oligosaccharide for N-glycosylation. Involved in assembling the dolichol-pyrophosphate-GlcNAc(2)-Man(5) intermediate on the cytoplasmic surface of the ER. The sequence is that of Chitobiosyldiphosphodolichol beta-mannosyltransferase (ALG1) from Debaryomyces hansenii (strain ATCC 36239 / CBS 767 / BCRC 21394 / JCM 1990 / NBRC 0083 / IGC 2968) (Yeast).